The chain runs to 419 residues: Indole prenyltransferase tdiB (419 aa).

58 to 59 (PS) is a binding site for L-tryptophan. Substrate is bound by residues arginine 81, lysine 165, tyrosine 167, arginine 236, lysine 238, tyrosine 240, tyrosine 330, and tyrosine 394.

The protein belongs to the tryptophan dimethylallyltransferase family.

It carries out the reaction didemethylasterriquinone D + dimethylallyl diphosphate = asterriquinone C1 + diphosphate. Its pathway is secondary metabolite biosynthesis. In terms of biological role, indole prenyltransferase; part of the gene cluster that mediates the biosynthesis of terrequinone A, an antitumor agent. The first step in the biosynthetic pathway for terrequinone A is formation of indole pyruvic acid (IPA) from L-tryptophan by the aminotransferase tdiD. The nonribosomal peptide synthase tdiA then immediately converts unstable IPA to didemethylasterriquinone D (DDAQ D), via condensation of 2 IPA molecules. The symmetric connectivity of the 2 IPA molecules is thought to arise by head-to-tail dual Claisen condensations facilitated by the TE domain. TdiB then catalyzes reverse prenylation by transferring dimethylallyl diphosphate to carbon atom 2' of DDAQ D, to yield asterriquinone C-1. Finally, tdiC and tdiE enzymes robustly convert asterriquinone C-1 to terrequinone A via a transformation involving regular prenylation at carbon atom 5, which requires elimination of the hydroxy group on C-5. The polypeptide is Indole prenyltransferase tdiB (Emericella nidulans (strain FGSC A4 / ATCC 38163 / CBS 112.46 / NRRL 194 / M139) (Aspergillus nidulans)).